Here is a 373-residue protein sequence, read N- to C-terminus: ORC1-type DNA replication protein 2 (373 aa).

ATP is bound by residues 63–67 (TGKTS), Y205, and R217.

This sequence belongs to the CDC6/cdc18 family.

Its function is as follows. Involved in regulation of DNA replication. The sequence is that of ORC1-type DNA replication protein 2 (cdc6-2) from Methanosarcina mazei (strain ATCC BAA-159 / DSM 3647 / Goe1 / Go1 / JCM 11833 / OCM 88) (Methanosarcina frisia).